The sequence spans 923 residues: Rap guanine nucleotide exchange factor 3 (923 aa).

Phosphoserine is present on serine 79. The region spanning 110–186 (ATCPNLIRDR…RDAQFYRFPG (77 aa)) is the DEP domain. Residues 218–242 (TVALRKPPGQRTDEELDLIFEELLH) are interaction with PDE3B. Residues 311 to 314 (GQLA) and 321 to 322 (RA) each bind 3',5'-cyclic AMP. Residues 384 to 518 (NRYTVMSGTP…EQWPERRRCH (135 aa)) form the N-terminal Ras-GEF domain. Residues 398-422 (ELLLEAMGPDSSAHDPTETFLSDFL) are interaction with PDE3B. Phosphoserine occurs at positions 528 and 864. The Ras-GEF domain maps to 662 to 889 (SAKDLAGQLT…ARISTCSEQS (228 aa)).

As to quaternary structure, interacts with PDE3B and PIK3R6; form a signaling complex that regulates phosphatidylinositol 3-kinase gamma in angiogenesis. In terms of tissue distribution, widely expressed with highest levels in adult kidney, heart, thyroid and brain, and fetal kidney.

It localises to the endomembrane system. Its function is as follows. Guanine nucleotide exchange factor (GEF) for RAP1A and RAP2A small GTPases that is activated by binding cAMP. Through simultaneous binding of PDE3B to RAPGEF3 and PIK3R6 is assembled in a signaling complex in which it activates the PI3K gamma complex and which is involved in angiogenesis. Plays a role in the modulation of the cAMP-induced dynamic control of endothelial barrier function through a pathway that is independent on Rho-mediated signaling. Required for the actin rearrangement at cell-cell junctions, such as stress fibers and junctional actin. This is Rap guanine nucleotide exchange factor 3 (RAPGEF3) from Homo sapiens (Human).